A 707-amino-acid polypeptide reads, in one-letter code: Polyribonucleotide nucleotidyltransferase (707 aa).

The Mg(2+) site is built by aspartate 485 and aspartate 491. The KH domain maps to 552-615 (PRITVINIPK…AAIKWIKGIV (64 aa)). One can recognise an S1 motif domain in the interval 621-689 (GEIYEGKVVK…DRGKVKLSMK (69 aa)).

This sequence belongs to the polyribonucleotide nucleotidyltransferase family. Mg(2+) serves as cofactor.

It localises to the cytoplasm. The catalysed reaction is RNA(n+1) + phosphate = RNA(n) + a ribonucleoside 5'-diphosphate. Involved in mRNA degradation. Catalyzes the phosphorolysis of single-stranded polyribonucleotides processively in the 3'- to 5'-direction. The chain is Polyribonucleotide nucleotidyltransferase from Rhodospirillum centenum (strain ATCC 51521 / SW).